A 27-amino-acid chain; its full sequence is VGCEECPMHCKGKKALPTCDYGCECND.

3 cysteine pairs are disulfide-bonded: Cys-3–Cys-19, Cys-6–Cys-23, and Cys-10–Cys-25.

It belongs to the short scorpion toxin superfamily. Potassium channel inhibitor family. Alpha-KTx 09 subfamily. Expressed by the venom gland.

The protein localises to the secreted. Its function is as follows. May play a role in blocking voltage-gated potassium channels Kv1.2/KCNA2, Kv1.3/KCNA3 and Kv1.6/KCNA6 to a lesser extent. The sequence is that of Potassium channel toxin alpha-KTx 9.11 from Mesobuthus gibbosus (Mediterranean checkered scorpion).